The primary structure comprises 491 residues: Phosphoethanolamine N-methyltransferase 1 (491 aa).

Ala2 is subject to N-acetylalanine. S-adenosyl-L-homocysteine is bound by residues Gly61, Arg66, Asp82, Asp107, Val108, and Asn126. Residues Ser159, Ser164, Gly165, Arg169, and Tyr176 each coordinate phosphocholine. Residues 245–246 and Tyr254 each bind N-methylethanolamine phosphate; that span reads QY. Tyr254 is a phosphocholine binding site. S-adenosyl-L-homocysteine is bound by residues Val263, Ser264, Gly290, Asp312, Asp338, Cys339, and Arg355. Tyr386, Tyr400, Arg404, Tyr406, and Lys472 together coordinate phosphocholine. N-methylethanolamine phosphate-binding positions include Tyr386, Tyr400, 404–406, and Lys472; that span reads RGY.

This sequence belongs to the class I-like SAM-binding methyltransferase superfamily. PEAMT family. Highly expressed in the meristem and elongation zones of the root. Expressed in differentiated root epidermal cells. Highly expressed in leaf vasculature.

It is found in the cytoplasm. The catalysed reaction is phosphoethanolamine + S-adenosyl-L-methionine = N-methylethanolamine phosphate + S-adenosyl-L-homocysteine + H(+). It catalyses the reaction N-methylethanolamine phosphate + S-adenosyl-L-methionine = N,N-dimethylethanolamine phosphate + S-adenosyl-L-homocysteine + H(+). The enzyme catalyses N,N-dimethylethanolamine phosphate + S-adenosyl-L-methionine = phosphocholine + S-adenosyl-L-homocysteine + H(+). It participates in phospholipid metabolism; phosphatidylcholine biosynthesis; phosphocholine from phosphoethanolamine: step 1/1. Its function is as follows. Involved in phosphocholine biosynthesis. Catalyzes the N-methylation of phosphoethanolamine, phosphomonomethylethanolamine and phosphodimethylethanolamine, the three methylation steps required to convert phosphoethanolamine to phosphocholine (PC). Required for root system development and epidermal cell integrity through its role in choline and phospholipid metabolism. In association with NMT3, regulates PC homeostasis, phase transition at the shoot apex, coordinated organ development, and fertility. In association with NMT3, involved in phosphatidylcholine biosynthesis and vascular development. In association with NMT2, involved in the production of phosphatidylcholine in roots, essential for root development. In association with NMT2 produce phosphocholine mainly for leaf growth maintenance. Contributes to the regulation of overall root zonation dynamics through reactive oxygen species (ROS) and auxin-regulated cell differentiation. Participates in root development of primary root elongation under salt stress conditions by balancing reactive oxygen species (ROS) production and distribution through abscisic acid (ABA) signaling. This Arabidopsis thaliana (Mouse-ear cress) protein is Phosphoethanolamine N-methyltransferase 1.